Reading from the N-terminus, the 367-residue chain is Protein RecA (367 aa).

73–80 (GPESSGKT) contributes to the ATP binding site.

Belongs to the RecA family.

The protein resides in the cytoplasm. Functionally, can catalyze the hydrolysis of ATP in the presence of single-stranded DNA, the ATP-dependent uptake of single-stranded DNA by duplex DNA, and the ATP-dependent hybridization of homologous single-stranded DNAs. It interacts with LexA causing its activation and leading to its autocatalytic cleavage. In Delftia acidovorans (strain DSM 14801 / SPH-1), this protein is Protein RecA.